A 187-amino-acid chain; its full sequence is Ribose 1,5-bisphosphate phosphokinase PhnN (187 aa).

Residue 10–17 (GPSGSGKD) coordinates ATP.

This sequence belongs to the ribose 1,5-bisphosphokinase family.

It catalyses the reaction alpha-D-ribose 1,5-bisphosphate + ATP = 5-phospho-alpha-D-ribose 1-diphosphate + ADP. The protein operates within metabolic intermediate biosynthesis; 5-phospho-alpha-D-ribose 1-diphosphate biosynthesis; 5-phospho-alpha-D-ribose 1-diphosphate from D-ribose 5-phosphate (route II): step 3/3. Functionally, catalyzes the phosphorylation of ribose 1,5-bisphosphate to 5-phospho-D-ribosyl alpha-1-diphosphate (PRPP). This Klebsiella pneumoniae subsp. pneumoniae (strain ATCC 700721 / MGH 78578) protein is Ribose 1,5-bisphosphate phosphokinase PhnN.